A 394-amino-acid chain; its full sequence is Elongation factor Tu (394 aa).

A tr-type G domain is found at 10 to 204 (KPHVNIGTIG…AVDSYIPQPV (195 aa)). Residues 19-26 (GHVDHGKT) are G1. 19 to 26 (GHVDHGKT) provides a ligand contact to GTP. Thr-26 contacts Mg(2+). Residues 60-64 (GITIS) are G2. The tract at residues 81–84 (DCPG) is G3. GTP-binding positions include 81-85 (DCPGH) and 136-139 (NKVD). Residues 136–139 (NKVD) form a G4 region. Residues 174-176 (SAL) form a G5 region.

This sequence belongs to the TRAFAC class translation factor GTPase superfamily. Classic translation factor GTPase family. EF-Tu/EF-1A subfamily. As to quaternary structure, monomer.

Its subcellular location is the cytoplasm. It carries out the reaction GTP + H2O = GDP + phosphate + H(+). In terms of biological role, GTP hydrolase that promotes the GTP-dependent binding of aminoacyl-tRNA to the A-site of ribosomes during protein biosynthesis. This is Elongation factor Tu from Rickettsia parkeri.